The sequence spans 51 residues: Large ribosomal subunit protein bL33 (51 aa).

The tract at residues 1-21 (MRDKIKLESSAGTGHFYTTTK) is disordered. Positions 10-20 (SAGTGHFYTTT) are enriched in polar residues.

Belongs to the bacterial ribosomal protein bL33 family.

This chain is Large ribosomal subunit protein bL33 (rpmG), found in Neisseria meningitidis serogroup A / serotype 4A (strain DSM 15465 / Z2491).